The following is a 111-amino-acid chain: Colipase (111 aa).

An N-terminal signal peptide occupies residues 1–16 (MKVLVLLLVTLAVVYA). Positions 17-21 (APDPR) are cleaved as a propeptide — enterostatin, activation peptide. 5 disulfide bridges follow: C33/C44, C39/C55, C43/C77, C65/C85, and C79/C103.

It belongs to the colipase family. In terms of assembly, forms a 1:1 stoichiometric complex with pancreatic lipase. Expressed by the pancreas.

It is found in the secreted. Functionally, colipase is a cofactor of pancreatic lipase. It allows the lipase to anchor itself to the lipid-water interface. Without colipase the enzyme is washed off by bile salts, which have an inhibitory effect on the lipase. In terms of biological role, enterostatin has a biological activity as a satiety signal. The protein is Colipase (CLPS) of Ictidomys tridecemlineatus (Thirteen-lined ground squirrel).